We begin with the raw amino-acid sequence, 83 residues long: MNKLVSDGSVKKINYPVLYESGITPPLCEVSAPEPDAGGKRIVAYVYKSSRSTVFENPDIVKTCTVRDLKKDFVNCDEKGEGQ.

The protein is Protein TrbG (trbG) of Escherichia coli (strain K12).